Here is a 514-residue protein sequence, read N- to C-terminus: tRNA-2-methylthio-N(6)-dimethylallyladenosine synthase (514 aa).

The region spanning 68-186 (RTFLIKTYGC…LPEILEEAYL (119 aa)) is the MTTase N-terminal domain. Residues cysteine 77, cysteine 113, cysteine 147, cysteine 223, cysteine 227, and cysteine 230 each coordinate [4Fe-4S] cluster. Positions 209 to 439 (REGSTKAWVN…NKKVGHYSEK (231 aa)) constitute a Radical SAM core domain. One can recognise a TRAM domain in the interval 442-505 (NQYEGKTVTV…QYSLNGTFKE (64 aa)).

It belongs to the methylthiotransferase family. MiaB subfamily. In terms of assembly, monomer. Requires [4Fe-4S] cluster as cofactor.

The protein localises to the cytoplasm. The enzyme catalyses N(6)-dimethylallyladenosine(37) in tRNA + (sulfur carrier)-SH + AH2 + 2 S-adenosyl-L-methionine = 2-methylsulfanyl-N(6)-dimethylallyladenosine(37) in tRNA + (sulfur carrier)-H + 5'-deoxyadenosine + L-methionine + A + S-adenosyl-L-homocysteine + 2 H(+). Catalyzes the methylthiolation of N6-(dimethylallyl)adenosine (i(6)A), leading to the formation of 2-methylthio-N6-(dimethylallyl)adenosine (ms(2)i(6)A) at position 37 in tRNAs that read codons beginning with uridine. In Staphylococcus haemolyticus (strain JCSC1435), this protein is tRNA-2-methylthio-N(6)-dimethylallyladenosine synthase.